Consider the following 489-residue polypeptide: Betaine aldehyde dehydrogenase (489 aa).

Positions 26 and 93 each coordinate K(+). 150 to 152 (GAW) is a binding site for NAD(+). Residue K162 is the Charge relay system of the active site. 176–179 (KPSE) is a binding site for NAD(+). V180 is a binding site for K(+). Residue 229–232 (GVET) participates in NAD(+) binding. K(+) is bound at residue L245. The active-site Proton acceptor is the E251. G253, C285, and E386 together coordinate NAD(+). C285 functions as the Nucleophile in the catalytic mechanism. C285 carries the post-translational modification Cysteine sulfenic acid (-SOH). K(+) is bound by residues K456 and G459. E463 serves as the catalytic Charge relay system.

This sequence belongs to the aldehyde dehydrogenase family. In terms of assembly, dimer of dimers. It depends on K(+) as a cofactor.

The enzyme catalyses betaine aldehyde + NAD(+) + H2O = glycine betaine + NADH + 2 H(+). The protein operates within amine and polyamine biosynthesis; betaine biosynthesis via choline pathway; betaine from betaine aldehyde: step 1/1. Its function is as follows. Involved in the biosynthesis of the osmoprotectant glycine betaine. Catalyzes the irreversible oxidation of betaine aldehyde to the corresponding acid. This chain is Betaine aldehyde dehydrogenase, found in Burkholderia cenocepacia (strain ATCC BAA-245 / DSM 16553 / LMG 16656 / NCTC 13227 / J2315 / CF5610) (Burkholderia cepacia (strain J2315)).